The following is a 76-amino-acid chain: DNA-directed RNA polymerase subunit epsilon (76 aa).

Belongs to the RNA polymerase subunit epsilon family. RNAP is composed of a core of 2 alpha, a beta and a beta' subunit. The core is associated with a delta subunit, and at least one of epsilon or omega. When a sigma factor is associated with the core the holoenzyme is formed, which can initiate transcription.

It catalyses the reaction RNA(n) + a ribonucleoside 5'-triphosphate = RNA(n+1) + diphosphate. Its function is as follows. A non-essential component of RNA polymerase (RNAP). The chain is DNA-directed RNA polymerase subunit epsilon from Streptococcus mutans serotype c (strain ATCC 700610 / UA159).